Consider the following 347-residue polypeptide: GMP reductase (347 aa).

Ala-108 to Ala-131 contributes to the NADP(+) binding site. Residues Gly-181 and Gly-183 each coordinate K(+). The Thioimidate intermediate role is filled by Cys-186. Ile-216–Val-239 lines the NADP(+) pocket.

It belongs to the IMPDH/GMPR family. GuaC type 1 subfamily. As to quaternary structure, homotetramer.

It catalyses the reaction IMP + NH4(+) + NADP(+) = GMP + NADPH + 2 H(+). Catalyzes the irreversible NADPH-dependent deamination of GMP to IMP. It functions in the conversion of nucleobase, nucleoside and nucleotide derivatives of G to A nucleotides, and in maintaining the intracellular balance of A and G nucleotides. This chain is GMP reductase, found in Shigella flexneri.